Here is a 40-residue protein sequence, read N- to C-terminus: Photosystem II reaction center protein J (40 aa).

Residues 8–28 (IPLWIIGTVTGIPVIGLIGIF) form a helical membrane-spanning segment.

Belongs to the PsbJ family. PSII is composed of 1 copy each of membrane proteins PsbA, PsbB, PsbC, PsbD, PsbE, PsbF, PsbH, PsbI, PsbJ, PsbK, PsbL, PsbM, PsbT, PsbX, PsbY, PsbZ, Psb30/Ycf12, at least 3 peripheral proteins of the oxygen-evolving complex and a large number of cofactors. It forms dimeric complexes.

The protein resides in the plastid. It is found in the chloroplast thylakoid membrane. Its function is as follows. One of the components of the core complex of photosystem II (PSII). PSII is a light-driven water:plastoquinone oxidoreductase that uses light energy to abstract electrons from H(2)O, generating O(2) and a proton gradient subsequently used for ATP formation. It consists of a core antenna complex that captures photons, and an electron transfer chain that converts photonic excitation into a charge separation. The chain is Photosystem II reaction center protein J from Citrus sinensis (Sweet orange).